Here is a 255-residue protein sequence, read N- to C-terminus: Imidazole glycerol phosphate synthase subunit HisF (255 aa).

Residues Asp-11 and Asp-130 contribute to the active site.

Belongs to the HisA/HisF family. As to quaternary structure, heterodimer of HisH and HisF.

Its subcellular location is the cytoplasm. The catalysed reaction is 5-[(5-phospho-1-deoxy-D-ribulos-1-ylimino)methylamino]-1-(5-phospho-beta-D-ribosyl)imidazole-4-carboxamide + L-glutamine = D-erythro-1-(imidazol-4-yl)glycerol 3-phosphate + 5-amino-1-(5-phospho-beta-D-ribosyl)imidazole-4-carboxamide + L-glutamate + H(+). The protein operates within amino-acid biosynthesis; L-histidine biosynthesis; L-histidine from 5-phospho-alpha-D-ribose 1-diphosphate: step 5/9. Functionally, IGPS catalyzes the conversion of PRFAR and glutamine to IGP, AICAR and glutamate. The HisF subunit catalyzes the cyclization activity that produces IGP and AICAR from PRFAR using the ammonia provided by the HisH subunit. The polypeptide is Imidazole glycerol phosphate synthase subunit HisF (Campylobacter lari (strain RM2100 / D67 / ATCC BAA-1060)).